The primary structure comprises 197 residues: Probable host range protein 2 (197 aa).

Positions 172 to 197 (DHDDNDNADDDEEDDDEVNDIEDDYE) are disordered. The span at 174–197 (DDNDNADDDEEDDDEVNDIEDDYE) shows a compositional bias: acidic residues.

This sequence belongs to the poxviridae C7 protein family.

This Ovis aries (Sheep) protein is Probable host range protein 2.